Reading from the N-terminus, the 212-residue chain is uncharacterized protein (212 aa).

Low complexity predominate over residues 87–105 (NNNNNNNNNNNHNHNNSNN). The segment at 87 to 107 (NNNNNNNNNNNHNHNNSNNTA) is disordered.

This is an uncharacterized protein from Saccharomyces cerevisiae (strain ATCC 204508 / S288c) (Baker's yeast).